We begin with the raw amino-acid sequence, 473 residues long: Cysteine--tRNA ligase (473 aa).

C28 contributes to the Zn(2+) binding site. The 'HIGH' region motif lies at 30–40 (MTVYDFCHIGH). Positions 212, 237, and 241 each coordinate Zn(2+). The short motif at 277–281 (KMSKS) is the 'KMSKS' region element. An ATP-binding site is contributed by K280.

Belongs to the class-I aminoacyl-tRNA synthetase family. Monomer. Requires Zn(2+) as cofactor.

It is found in the cytoplasm. The catalysed reaction is tRNA(Cys) + L-cysteine + ATP = L-cysteinyl-tRNA(Cys) + AMP + diphosphate. The chain is Cysteine--tRNA ligase from Polynucleobacter asymbioticus (strain DSM 18221 / CIP 109841 / QLW-P1DMWA-1) (Polynucleobacter necessarius subsp. asymbioticus).